The sequence spans 351 residues: Minor outer capsid protein P9 (351 aa).

Disordered stretches follow at residues Gly245–Glu281 and Lys288–Ser307. Basic and acidic residues predominate over residues Lys288–Pro297.

It belongs to the phytoreovirus minor outer capsid protein P9 family.

It is found in the virion. Its subcellular location is the host cytoplasm. Minor outer capsid protein. This Rice dwarf virus (RDV) protein is Minor outer capsid protein P9.